The following is a 138-amino-acid chain: MLQPARRKYRKEQKGRNTGVATRGNSVAFGDFGLKCTDRGRLTARQLEAARRAISRHVKRGGRIWIRVFPDKPISQKPAEVRMGNGKGNPEYYVAEIQPGKIVFEIVGVTEELAREAFRLASAKLPLRTTFVSRMIGQ.

The span at 1 to 13 (MLQPARRKYRKEQ) shows a compositional bias: basic residues. Residues 1–22 (MLQPARRKYRKEQKGRNTGVAT) are disordered.

Belongs to the universal ribosomal protein uL16 family. As to quaternary structure, part of the 50S ribosomal subunit.

Its function is as follows. Binds 23S rRNA and is also seen to make contacts with the A and possibly P site tRNAs. The sequence is that of Large ribosomal subunit protein uL16 from Polaromonas naphthalenivorans (strain CJ2).